The sequence spans 124 residues: UPF0102 protein HCH_05895 (124 aa).

Belongs to the UPF0102 family.

In Hahella chejuensis (strain KCTC 2396), this protein is UPF0102 protein HCH_05895.